Consider the following 430-residue polypeptide: Serine hydroxymethyltransferase (430 aa).

A (6S)-5,6,7,8-tetrahydrofolate-binding site is contributed by 120 to 122 (GHI). Lys-226 is modified (N6-(pyridoxal phosphate)lysine).

Belongs to the SHMT family. Homodimer. Pyridoxal 5'-phosphate serves as cofactor.

It is found in the cytoplasm. The protein operates within amino-acid biosynthesis; glycine biosynthesis; glycine from L-serine: step 1/1. Its function is as follows. Catalyzes the reversible interconversion of serine and glycine with a modified folate serving as the one-carbon carrier. Also exhibits a pteridine-independent aldolase activity toward beta-hydroxyamino acids, producing glycine and aldehydes, via a retro-aldol mechanism. The chain is Serine hydroxymethyltransferase from Pyrobaculum neutrophilum (strain DSM 2338 / JCM 9278 / NBRC 100436 / V24Sta) (Thermoproteus neutrophilus).